Reading from the N-terminus, the 346-residue chain is Sensor protein kinase GraS (346 aa).

The next 2 helical transmembrane spans lie at 15–35 (MNWI…SLID) and 43–63 (LFYI…LTYF). One can recognise a Histidine kinase domain in the interval 126-332 (EFVHDIKTPV…TVRLIFPLQN (207 aa)).

As to quaternary structure, interacts with GraX.

The protein localises to the cell membrane. It carries out the reaction ATP + protein L-histidine = ADP + protein N-phospho-L-histidine.. Functionally, member of the two-component regulatory system GraR/GraS involved in resistance against cationic antimicrobial peptides (CAMPs). Functions as a sensor protein kinase which phosphorylates GraR through the auxiliary protein GraX. In turn, GraR up-regulates many genes such as adhesins, exoproteins, transporters, toxins, and proteins involved in cell wall synthesis. Down-regulates the expression of many genes involved in RNA and amino acid synthesis or glycolysis. The sequence is that of Sensor protein kinase GraS (graS) from Staphylococcus aureus (strain bovine RF122 / ET3-1).